Consider the following 340-residue polypeptide: Heat-inducible transcription repressor HrcA (340 aa).

The protein belongs to the HrcA family.

Its function is as follows. Negative regulator of class I heat shock genes (grpE-dnaK-dnaJ and groELS operons). Prevents heat-shock induction of these operons. This Phytoplasma australiense protein is Heat-inducible transcription repressor HrcA.